A 409-amino-acid polypeptide reads, in one-letter code: Patellin-6 (409 aa).

In terms of domain architecture, CRAL-TRIO spans 116–294 (EKLTEEDLGF…QYGGLSRPTD (179 aa)). The GOLD domain occupies 270 to 404 (AETLYKFIRP…VAAYRYTVRK (135 aa)).

The protein belongs to the patellin family.

Its subcellular location is the membrane. It is found in the cytoplasm. In terms of biological role, carrier protein that may be involved in membrane-trafficking events associated with cell-plate formation during cytokinesis. Binds to some hydrophobic molecules such as phosphoinositides and promotes their transfer between the different cellular sites. In Arabidopsis thaliana (Mouse-ear cress), this protein is Patellin-6 (PATL6).